Reading from the N-terminus, the 777-residue chain is DNA ligase (777 aa).

NAD(+) contacts are provided by residues 35 to 39, 84 to 85, and Glu116; these read DAEYD and SL. Catalysis depends on Lys118, which acts as the N6-AMP-lysine intermediate. Residues Arg139, Glu176, Lys293, and Lys317 each contribute to the NAD(+) site. Residues Cys411, Cys414, Cys429, and Cys435 each contribute to the Zn(2+) site. The region spanning 691–777 is the BRCT domain; sequence MESQPLEGQT…NQHGIDPGAL (87 aa).

It belongs to the NAD-dependent DNA ligase family. LigA subfamily. Mg(2+) serves as cofactor. It depends on Mn(2+) as a cofactor.

The enzyme catalyses NAD(+) + (deoxyribonucleotide)n-3'-hydroxyl + 5'-phospho-(deoxyribonucleotide)m = (deoxyribonucleotide)n+m + AMP + beta-nicotinamide D-nucleotide.. Its function is as follows. DNA ligase that catalyzes the formation of phosphodiester linkages between 5'-phosphoryl and 3'-hydroxyl groups in double-stranded DNA using NAD as a coenzyme and as the energy source for the reaction. It is essential for DNA replication and repair of damaged DNA. The sequence is that of DNA ligase from Alcanivorax borkumensis (strain ATCC 700651 / DSM 11573 / NCIMB 13689 / SK2).